We begin with the raw amino-acid sequence, 431 residues long: Glucose-1-phosphate adenylyltransferase (431 aa).

K39 contacts beta-D-fructose 1,6-bisphosphate. Residues R40, H46, and R52 each contribute to the AMP site. Residue Y114 coordinates alpha-D-glucose 1-phosphate. R130 is a binding site for AMP. Alpha-D-glucose 1-phosphate contacts are provided by residues G179, 194–195, and S212; that span reads EK. AMP-binding residues include E370 and R386. Residues 419 to 423 and 429 to 431 each bind beta-D-fructose 1,6-bisphosphate; these read REMLR and QER.

It belongs to the bacterial/plant glucose-1-phosphate adenylyltransferase family. Homotetramer.

The catalysed reaction is alpha-D-glucose 1-phosphate + ATP + H(+) = ADP-alpha-D-glucose + diphosphate. It functions in the pathway glycan biosynthesis; glycogen biosynthesis. Allosterically activated by fructose-1,6-bisphosphate (F16BP) and inhibited by AMP. Involved in the biosynthesis of ADP-glucose, a building block required for the elongation reactions to produce glycogen. Catalyzes the reaction between ATP and alpha-D-glucose 1-phosphate (G1P) to produce pyrophosphate and ADP-Glc. This Salmonella arizonae (strain ATCC BAA-731 / CDC346-86 / RSK2980) protein is Glucose-1-phosphate adenylyltransferase.